The sequence spans 498 residues: ATP synthase subunit beta, chloroplastic (498 aa).

Position 172-179 (172-179) interacts with ATP; it reads GGAGVGKT.

The protein belongs to the ATPase alpha/beta chains family. As to quaternary structure, F-type ATPases have 2 components, CF(1) - the catalytic core - and CF(0) - the membrane proton channel. CF(1) has five subunits: alpha(3), beta(3), gamma(1), delta(1), epsilon(1). CF(0) has four main subunits: a(1), b(1), b'(1) and c(9-12).

The protein resides in the plastid. It is found in the chloroplast thylakoid membrane. It carries out the reaction ATP + H2O + 4 H(+)(in) = ADP + phosphate + 5 H(+)(out). Its function is as follows. Produces ATP from ADP in the presence of a proton gradient across the membrane. The catalytic sites are hosted primarily by the beta subunits. The protein is ATP synthase subunit beta, chloroplastic of Phalaenopsis aphrodite subsp. formosana (Moth orchid).